Reading from the N-terminus, the 572-residue chain is Probable terpene synthase 13 (572 aa).

Aspartate 326, aspartate 330, and glutamate 478 together coordinate Mg(2+). The DDXXD motif motif lies at 326–330; that stretch reads DDIFD.

Belongs to the terpene synthase family. It depends on Mg(2+) as a cofactor.

Functionally, probable sesquiterpene synthase. The sequence is that of Probable terpene synthase 13 (TPS13) from Ricinus communis (Castor bean).